Here is an 89-residue protein sequence, read N- to C-terminus: Small ribosomal subunit protein uS15 (89 aa).

The protein belongs to the universal ribosomal protein uS15 family. In terms of assembly, part of the 30S ribosomal subunit. Forms a bridge to the 50S subunit in the 70S ribosome, contacting the 23S rRNA.

Its function is as follows. One of the primary rRNA binding proteins, it binds directly to 16S rRNA where it helps nucleate assembly of the platform of the 30S subunit by binding and bridging several RNA helices of the 16S rRNA. Functionally, forms an intersubunit bridge (bridge B4) with the 23S rRNA of the 50S subunit in the ribosome. This Desulfotalea psychrophila (strain LSv54 / DSM 12343) protein is Small ribosomal subunit protein uS15.